Consider the following 550-residue polypeptide: MNFGSQTPTIVVLKEGTDASQGKGQIISNINACVAVQEALKPTLGPLGSDILIVTSNQKTTISNDGATILKLLDVVHPAAKTLVDISRAQDAEVGDGTTSVTILAGELMKEAKPFLEEGISSHLIMKGYRKAVSLAVEKINELAVDITSEKSSGRELLERCARTAMSSKLIHNNADFFVKMCVDAVLSLDRNDLDDKLIGIKKIPGGAMEESLFINGVAFKKTFSYAGFEQQPKKFNNPKILSLNVELELKAEKDNAEVRVEHVEDYQAIVDAEWQLIFEKLRQVEETGANIVLSKLPIGDLATQFFADRNIFCAGRVSADDMNRVIQAVGGSIQSTTSDIKPEHLGTCALFEEMQIGSERYNLFQGCPQAKTCTLLLRGGAEQVIAEVERSLHDAIMIVKRALQNKLIVAGGGATEMEVSKCLRDYSKTIAGKQQMIINAFAKALEVIPRQLCENAGFDAIEILNKLRLAHSKGEKWYGVVFETENIGDNFAKFVWEPALVKINALNSATEATNLILSVDETITNKGSESANAGMMPPQGAGRGRGMPM.

The interval 529-550 (SESANAGMMPPQGAGRGRGMPM) is disordered.

This sequence belongs to the TCP-1 chaperonin family. As to quaternary structure, heterooligomeric complex of about 850 to 900 kDa that forms two stacked rings, 12 to 16 nm in diameter.

Its subcellular location is the cytoplasm. Molecular chaperone; assists the folding of proteins upon ATP hydrolysis. Known to play a role, in vitro, in the folding of actin and tubulin. In yeast may play a role in mitotic spindle formation. In Saccharomyces cerevisiae (strain ATCC 204508 / S288c) (Baker's yeast), this protein is T-complex protein 1 subunit eta (CCT7).